The sequence spans 376 residues: NIF3-like protein 1 (376 aa).

Position 108 is an N6-acetyllysine (K108). Residues 243–376 (LLLHTGMGRL…ETDRDPLRVV (134 aa)) form a mediates interaction with COPS2 region. Residue T254 is modified to Phosphothreonine. At S258 the chain carries Phosphoserine.

It belongs to the GTP cyclohydrolase I type 2/NIF3 family. As to quaternary structure, homodimer. Interacts with COPS2. Interacts with THOC7.

The protein localises to the cytoplasm. The protein resides in the nucleus. Functionally, may function as a transcriptional corepressor through its interaction with COPS2, negatively regulating the expression of genes involved in neuronal differentiation. The chain is NIF3-like protein 1 from Rattus norvegicus (Rat).